Consider the following 860-residue polypeptide: Receptor-like protein 31 (860 aa).

The N-terminal stretch at 1-23 (MMIPSQSCFCFFFMVSFFLHTLA) is a signal peptide. Residues 24-809 (SPTLRHCRHD…SEPEEHVINW (786 aa)) lie on the Extracellular side of the membrane. N-linked (GlcNAc...) asparagine glycosylation is found at N49, N64, N88, N95, N112, N117, N154, N178, N202, and N213. LRR repeat units follow at residues 108 to 131 (QHLHNLTLSNCSLYGDIPSSLGNL), 132 to 155 (FRLTLLDLSYNYLVGQVPPSIGNL), 156 to 179 (SRLTILDLWDNKLVGQLPASIGNL), 181 to 202 (QLEYLIFSHNKFSGNIPVTFSN), 203 to 226 (LTKLLVVNLYNNSFESMLPLDMSG), and 227 to 251 (FQNLDYFNVGENSFSGTLPKSLFTI). One copy of the LRR 7; degenerate repeat lies at 252-276 (PSLRWANLEGNMFKGPIEFRNMYSP). LRR repeat units follow at residues 277–301 (STRLQYLFLSQNKFDGPIPDTLSQY), 302–325 (LNLIELDLSFNNLTGSFPTFLFTI), 326–349 (PTLERVNLEGNHLKGPVEFGNMSS), 350–374 (SSSLKFLNFAQNEFNGSIPESVSQY), 376–398 (NLEELHLSFNNFIGTIPRSISKL), 400–419 (KLEYFCLEDNNMVGEVPSWL), 420–444 (WRLTMVALSNNSFNSFGESSEGLDE), 446–468 (QVQWLDLSSNSFQGPFPHWICKL), 469–494 (RSLEILIMSDNRFNGSIPPCLSSFMV), 496–517 (LTDLILRNNSLSGPLPDIFVNA), 518–541 (TKLLSLDVSRNKLDGVLPKSLIHC), 543–564 (AMQLLNVRSNKIKDKFPSWLGS), 565–591 (LPSLHVLILRSNEFYGTLYQPHASIGF), and 592–615 (QSLRVIDVSHNDLIGTLPSFYFSS). N-linked (GlcNAc...) asparagine glycans are attached at residues N313, N346, and N364. A glycan (N-linked (GlcNAc...) asparagine) is linked at N429. N482, N503, and N516 each carry an N-linked (GlcNAc...) asparagine glycan. Residues N642, N673, and N697 are each glycosylated (N-linked (GlcNAc...) asparagine). 4 LRR repeats span residues 665–690 (INEENKVINFSGNRFSGNIPESIGLL), 691–714 (KELRHLNLSSNAFTGNIPQSLANL), 716–738 (KLEALDLSLNQLSGQIPQGLGSL), and 740–763 (FMSTMNFSYNFLEGPVPKSTQFQG). N745 and N765 each carry an N-linked (GlcNAc...) asparagine glycan. Residues 810–830 (IAAGIAYGPGVVCGLVIGHIF) traverse the membrane as a helical segment. The Cytoplasmic segment spans residues 831–860 (LSHKHECWFMEKFRRKKPKVVTRIARPSKH).

This sequence belongs to the RLP family.

It is found in the cell membrane. The polypeptide is Receptor-like protein 31 (Arabidopsis thaliana (Mouse-ear cress)).